Consider the following 188-residue polypeptide: Elongation factor P (188 aa).

The protein belongs to the elongation factor P family.

The protein localises to the cytoplasm. Its pathway is protein biosynthesis; polypeptide chain elongation. Involved in peptide bond synthesis. Stimulates efficient translation and peptide-bond synthesis on native or reconstituted 70S ribosomes in vitro. Probably functions indirectly by altering the affinity of the ribosome for aminoacyl-tRNA, thus increasing their reactivity as acceptors for peptidyl transferase. This Caulobacter vibrioides (strain ATCC 19089 / CIP 103742 / CB 15) (Caulobacter crescentus) protein is Elongation factor P.